The following is a 2931-amino-acid chain: Probable polyketide synthase 9/36 (2931 aa).

The region spanning Glu11 to Glu442 is the Ketosynthase family 3 (KS3) domain. Catalysis depends on for beta-ketoacyl synthase activity residues Cys181, His323, and His362. The tract at residues Gly635–Tyr668 is acyl/malonyl transferase. Residue Ser645 is the For acyl/malonyl transferase activity of the active site. The tract at residues Ile925–Asn1047 is N-terminal hotdog fold. A PKS/mFAS DH domain is found at Ile925–Ser1209. The active-site Proton acceptor; for dehydratase activity is His959. The C-terminal hotdog fold stretch occupies residues Asn1064–Ser1209. Catalysis depends on Asp1122, which acts as the Proton donor; for dehydratase activity. A helical membrane pass occupies residues Leu2293–Thr2313. The Carrier domain occupies Thr2429–Leu2506. Ser2466 is subject to O-(pantetheine 4'-phosphoryl)serine. Residues Lys2553–Val2573 form a helical membrane-spanning segment.

The cofactor is pantetheine 4'-phosphate.

The protein localises to the membrane. Probable polyketide synthase. This Dictyostelium discoideum (Social amoeba) protein is Probable polyketide synthase 9/36 (pks9).